The following is a 342-amino-acid chain: tRNA N6-adenosine threonylcarbamoyltransferase (342 aa).

Residues His111 and His115 each coordinate Fe cation. Substrate-binding positions include 133-137 (AVSGG), Asp166, Gly179, Asp183, and Asn273. Asp301 is a Fe cation binding site.

This sequence belongs to the KAE1 / TsaD family. Requires Fe(2+) as cofactor.

The protein localises to the cytoplasm. The catalysed reaction is L-threonylcarbamoyladenylate + adenosine(37) in tRNA = N(6)-L-threonylcarbamoyladenosine(37) in tRNA + AMP + H(+). Its function is as follows. Required for the formation of a threonylcarbamoyl group on adenosine at position 37 (t(6)A37) in tRNAs that read codons beginning with adenine. Is involved in the transfer of the threonylcarbamoyl moiety of threonylcarbamoyl-AMP (TC-AMP) to the N6 group of A37, together with TsaE and TsaB. TsaD likely plays a direct catalytic role in this reaction. This chain is tRNA N6-adenosine threonylcarbamoyltransferase, found in Syntrophotalea carbinolica (strain DSM 2380 / NBRC 103641 / GraBd1) (Pelobacter carbinolicus).